A 121-amino-acid chain; its full sequence is Large ribosomal subunit protein bL12 (121 aa).

It belongs to the bacterial ribosomal protein bL12 family. As to quaternary structure, homodimer. Part of the ribosomal stalk of the 50S ribosomal subunit. Forms a multimeric L10(L12)X complex, where L10 forms an elongated spine to which 2 to 4 L12 dimers bind in a sequential fashion. Binds GTP-bound translation factors.

Forms part of the ribosomal stalk which helps the ribosome interact with GTP-bound translation factors. Is thus essential for accurate translation. The polypeptide is Large ribosomal subunit protein bL12 (Aliivibrio salmonicida (strain LFI1238) (Vibrio salmonicida (strain LFI1238))).